The following is a 354-amino-acid chain: Probable cinnamyl alcohol dehydrogenase 5 (354 aa).

A Zn(2+)-binding site is contributed by Cys43. Position 45 (Ser45) interacts with NADP(+). His65, Glu66, Cys96, Cys99, Cys102, Cys110, and Cys159 together coordinate Zn(2+). NADP(+) is bound by residues Thr163, 184 to 189 (GLGGLG), 207 to 212 (SSSPGK), Thr247, Gly271, and 294 to 296 (SCI).

The protein belongs to the zinc-containing alcohol dehydrogenase family. In terms of assembly, homodimer. Zn(2+) is required as a cofactor.

It catalyses the reaction (E)-cinnamyl alcohol + NADP(+) = (E)-cinnamaldehyde + NADPH + H(+). It carries out the reaction (E)-coniferol + NADP(+) = (E)-coniferaldehyde + NADPH + H(+). The catalysed reaction is (E)-sinapyl alcohol + NADP(+) = (E)-sinapaldehyde + NADPH + H(+). The enzyme catalyses (E)-4-coumaroyl alcohol + NADP(+) = (E)-4-coumaraldehyde + NADPH + H(+). It catalyses the reaction (E)-caffeyl alcohol + NADP(+) = (E)-caffeyl aldehyde + NADPH + H(+). It functions in the pathway aromatic compound metabolism; phenylpropanoid biosynthesis. Functionally, involved in lignin biosynthesis. Catalyzes the final step specific for the production of lignin monomers. Catalyzes the NADPH-dependent reduction of coniferaldehyde, 5-hydroxyconiferaldehyde, sinapaldehyde, 4-coumaraldehyde and caffeyl aldehyde to their respective alcohols. The polypeptide is Probable cinnamyl alcohol dehydrogenase 5 (Oryza sativa subsp. japonica (Rice)).